Consider the following 431-residue polypeptide: Adenylosuccinate lyase (431 aa).

Residues 4 to 5 (RY), 67 to 69 (RHD), and 93 to 94 (TS) contribute to the N(6)-(1,2-dicarboxyethyl)-AMP site. The active-site Proton donor/acceptor is H141. Residue Q212 participates in N(6)-(1,2-dicarboxyethyl)-AMP binding. S262 (proton donor/acceptor) is an active-site residue. Residues S263, 268–270 (KRN), N276, and 307–311 (SAERI) each bind N(6)-(1,2-dicarboxyethyl)-AMP.

This sequence belongs to the lyase 1 family. Adenylosuccinate lyase subfamily. As to quaternary structure, homodimer and homotetramer. Residues from neighboring subunits contribute catalytic and substrate-binding residues to each active site.

It catalyses the reaction N(6)-(1,2-dicarboxyethyl)-AMP = fumarate + AMP. The enzyme catalyses (2S)-2-[5-amino-1-(5-phospho-beta-D-ribosyl)imidazole-4-carboxamido]succinate = 5-amino-1-(5-phospho-beta-D-ribosyl)imidazole-4-carboxamide + fumarate. It functions in the pathway purine metabolism; AMP biosynthesis via de novo pathway; AMP from IMP: step 2/2. The protein operates within purine metabolism; IMP biosynthesis via de novo pathway; 5-amino-1-(5-phospho-D-ribosyl)imidazole-4-carboxamide from 5-amino-1-(5-phospho-D-ribosyl)imidazole-4-carboxylate: step 2/2. Its function is as follows. Catalyzes two reactions in de novo purine nucleotide biosynthesis. Catalyzes the breakdown of 5-aminoimidazole- (N-succinylocarboxamide) ribotide (SAICAR or 2-[5-amino-1-(5-phospho-beta-D-ribosyl)imidazole-4-carboxamido]succinate) to 5-aminoimidazole-4-carboxamide ribotide (AICAR or 5-amino-1-(5-phospho-beta-D-ribosyl)imidazole-4-carboxamide) and fumarate, and of adenylosuccinate (ADS or N(6)-(1,2-dicarboxyethyl)-AMP) to adenosine monophosphate (AMP) and fumarate. The polypeptide is Adenylosuccinate lyase (purB) (Staphylococcus saprophyticus subsp. saprophyticus (strain ATCC 15305 / DSM 20229 / NCIMB 8711 / NCTC 7292 / S-41)).